Consider the following 232-residue polypeptide: Mitochondrial import inner membrane translocase subunit Tim21 (232 aa).

Residues 1-31 constitute a mitochondrion transit peptide; it reads MLPRFLWRPVLCSYRALGSPSRSLTVSYRNL. The chain crosses the membrane as a helical span at residues 96–116; that stretch reads FTYFIVVLIGIGVTGGLFYVV.

This sequence belongs to the TIM21 family.

The protein resides in the mitochondrion membrane. Its function is as follows. May participate in the translocation of transit peptide-containing proteins across the mitochondrial inner membrane. The sequence is that of Mitochondrial import inner membrane translocase subunit Tim21 (timm21) from Xenopus laevis (African clawed frog).